Reading from the N-terminus, the 114-residue chain is uncharacterized protein (114 aa).

The span at 1 to 20 shows a compositional bias: basic and acidic residues; it reads MGLSRWHDKNSRPAEEKSEE. The disordered stretch occupies residues 1–22; the sequence is MGLSRWHDKNSRPAEEKSEEMQ.

Functionally, may be involved in phosphatase regulation and/or generation of precursor metabolites and energy. This is an uncharacterized protein from Saccharomyces cerevisiae (strain ATCC 204508 / S288c) (Baker's yeast).